Consider the following 111-residue polypeptide: Large ribosomal subunit protein uL22 (111 aa).

This sequence belongs to the universal ribosomal protein uL22 family. As to quaternary structure, part of the 50S ribosomal subunit.

Its function is as follows. This protein binds specifically to 23S rRNA; its binding is stimulated by other ribosomal proteins, e.g. L4, L17, and L20. It is important during the early stages of 50S assembly. It makes multiple contacts with different domains of the 23S rRNA in the assembled 50S subunit and ribosome. The globular domain of the protein is located near the polypeptide exit tunnel on the outside of the subunit, while an extended beta-hairpin is found that lines the wall of the exit tunnel in the center of the 70S ribosome. The polypeptide is Large ribosomal subunit protein uL22 (Clostridioides difficile (strain 630) (Peptoclostridium difficile)).